The primary structure comprises 309 residues: Homoserine O-acetyltransferase (309 aa).

C142 acts as the Acyl-thioester intermediate in catalysis. The substrate site is built by K163 and S192. The active-site Proton acceptor is H235. E237 is a catalytic residue. R249 lines the substrate pocket.

Belongs to the MetA family.

Its subcellular location is the cytoplasm. It catalyses the reaction L-homoserine + acetyl-CoA = O-acetyl-L-homoserine + CoA. It participates in amino-acid biosynthesis; L-methionine biosynthesis via de novo pathway; O-acetyl-L-homoserine from L-homoserine: step 1/1. Its function is as follows. Transfers an acetyl group from acetyl-CoA to L-homoserine, forming acetyl-L-homoserine. The chain is Homoserine O-acetyltransferase from Allorhizobium ampelinum (strain ATCC BAA-846 / DSM 112012 / S4) (Agrobacterium vitis (strain S4)).